The following is a 243-amino-acid chain: Geranylgeranylglyceryl phosphate synthase (243 aa).

Asp22 and Ser51 together coordinate Mg(2+). Sn-glycerol 1-phosphate contacts are provided by residues 169–175 (YLEAGSG), 200–201 (GG), and 222–223 (GT).

It belongs to the GGGP/HepGP synthase family. Group II subfamily. Mg(2+) is required as a cofactor.

The protein resides in the cytoplasm. The enzyme catalyses sn-glycerol 1-phosphate + (2E,6E,10E)-geranylgeranyl diphosphate = sn-3-O-(geranylgeranyl)glycerol 1-phosphate + diphosphate. It functions in the pathway membrane lipid metabolism; glycerophospholipid metabolism. In terms of biological role, prenyltransferase that catalyzes the transfer of the geranylgeranyl moiety of geranylgeranyl diphosphate (GGPP) to the C3 hydroxyl of sn-glycerol-1-phosphate (G1P). This reaction is the first ether-bond-formation step in the biosynthesis of archaeal membrane lipids. The chain is Geranylgeranylglyceryl phosphate synthase from Methanosphaera stadtmanae (strain ATCC 43021 / DSM 3091 / JCM 11832 / MCB-3).